A 449-amino-acid chain; its full sequence is Heterogeneous nuclear ribonucleoprotein H (449 aa).

N-acetylmethionine; in Heterogeneous nuclear ribonucleoprotein H; alternate is present on Met-1. N-acetylmethionine; in Heterogeneous nuclear ribonucleoprotein H, N-terminally processed is present on Met-2. The region spanning Phe-11–Asn-90 is the RRM 1 domain. At Ser-23 the chain carries Phosphoserine. Lys-35 is covalently cross-linked (Glycyl lysine isopeptide (Lys-Gly) (interchain with G-Cter in SUMO2)). Phosphoserine occurs at positions 54 and 63. Glycyl lysine isopeptide (Lys-Gly) (interchain with G-Cter in SUMO2) cross-links involve residues Lys-87 and Lys-98. Residues Gly-111 to Arg-188 form the RRM 2 domain. Residue Arg-233 is modified to Dimethylated arginine; alternate. The residue at position 233 (Arg-233) is an Omega-N-methylarginine; alternate. The 1-1 repeat unit spans residues Gly-234–Tyr-249. A 2 X 16 AA Gly-rich approximate repeats region spans residues Gly-234–Tyr-433. Tyr-246 carries the phosphotyrosine modification. Residues His-289–Thr-364 form the RRM 3 domain. Ser-310 is modified (phosphoserine). Repeat copies occupy residues His-354–Tyr-372, His-374–Tyr-392, and Gly-418–Tyr-433. The interval His-354–Tyr-392 is 2 X 19 AA perfect repeats.

Part of a ternary complex containing FUBP2, PTBP1, PTBP2 and HNRNPH1. Identified in the spliceosome C complex. Interacts with IGF2BP1. Interacts with CUGBP1; the interaction is RNA-dependent. Interacts with MBNL1; the interaction in RNA-independent. As to expression, expressed ubiquitously.

The protein localises to the nucleus. It is found in the nucleoplasm. Functionally, this protein is a component of the heterogeneous nuclear ribonucleoprotein (hnRNP) complexes which provide the substrate for the processing events that pre-mRNAs undergo before becoming functional, translatable mRNAs in the cytoplasm. Mediates pre-mRNA alternative splicing regulation. Inhibits, together with CUGBP1, insulin receptor (IR) pre-mRNA exon 11 inclusion in myoblast. Binds to the IR RNA. Binds poly(RG). This is Heterogeneous nuclear ribonucleoprotein H (HNRNPH1) from Homo sapiens (Human).